Here is a 109-residue protein sequence, read N- to C-terminus: Cytochrome bo(3) ubiquinol oxidase subunit 4 (109 aa).

Topologically, residues 1 to 17 (MSHSTDHSGASHGSVKT) are cytoplasmic. The helical transmembrane segment at 18 to 36 (YMTGFILSIILTVIPFWMV) threads the bilayer. Residues 37–45 (MTGAASPAV) are Periplasmic-facing. Residues 46-64 (ILGTILAMAVVQVLVHLVC) form a helical membrane-spanning segment. At 65-80 (FLHMNTKSDEGWNMTA) the chain is on the cytoplasmic side. A helical transmembrane segment spans residues 81 to 99 (FVFTVLIIAILVVGSIWIM). Residues 100 to 109 (WNLNYNMMMH) are Periplasmic-facing.

The protein belongs to the cytochrome c oxidase bacterial subunit 4 family. Heterooctamer of two A chains, two B chains, two C chains and two D chains.

It is found in the cell inner membrane. Cytochrome bo(3) ubiquinol terminal oxidase is the component of the aerobic respiratory chain of E.coli that predominates when cells are grown at high aeration. Has proton pump activity across the membrane in addition to electron transfer, pumping 2 protons/electron. This chain is Cytochrome bo(3) ubiquinol oxidase subunit 4 (cyoD), found in Escherichia coli O157:H7.